Consider the following 422-residue polypeptide: Gamma-glutamyl phosphate reductase (422 aa).

The protein belongs to the gamma-glutamyl phosphate reductase family.

It localises to the cytoplasm. The enzyme catalyses L-glutamate 5-semialdehyde + phosphate + NADP(+) = L-glutamyl 5-phosphate + NADPH + H(+). Its pathway is amino-acid biosynthesis; L-proline biosynthesis; L-glutamate 5-semialdehyde from L-glutamate: step 2/2. Catalyzes the NADPH-dependent reduction of L-glutamate 5-phosphate into L-glutamate 5-semialdehyde and phosphate. The product spontaneously undergoes cyclization to form 1-pyrroline-5-carboxylate. This Chlorobium phaeovibrioides (strain DSM 265 / 1930) (Prosthecochloris vibrioformis (strain DSM 265)) protein is Gamma-glutamyl phosphate reductase.